The primary structure comprises 373 residues: Erythronate-4-phosphate dehydrogenase (373 aa).

Positions 45 and 66 each coordinate substrate. NAD(+) is bound by residues D146 and T175. R208 is an active-site residue. Residue D232 participates in NAD(+) binding. E237 is an active-site residue. The active-site Proton donor is the H254. G257 provides a ligand contact to NAD(+). Residue Y258 participates in substrate binding.

This sequence belongs to the D-isomer specific 2-hydroxyacid dehydrogenase family. PdxB subfamily. As to quaternary structure, homodimer.

The protein localises to the cytoplasm. The catalysed reaction is 4-phospho-D-erythronate + NAD(+) = (R)-3-hydroxy-2-oxo-4-phosphooxybutanoate + NADH + H(+). It functions in the pathway cofactor biosynthesis; pyridoxine 5'-phosphate biosynthesis; pyridoxine 5'-phosphate from D-erythrose 4-phosphate: step 2/5. Catalyzes the oxidation of erythronate-4-phosphate to 3-hydroxy-2-oxo-4-phosphonooxybutanoate. This Serratia proteamaculans (strain 568) protein is Erythronate-4-phosphate dehydrogenase.